Here is a 64-residue protein sequence, read N- to C-terminus: Large ribosomal subunit protein bL33 (64 aa).

The protein belongs to the bacterial ribosomal protein bL33 family.

This chain is Large ribosomal subunit protein bL33, found in Prochlorococcus marinus (strain MIT 9313).